The sequence spans 372 residues: Zinc finger protein dpff-1 (372 aa).

A disordered region spans residues 108–204 (VGPTTESVSD…SRSIVKETKY (97 aa)). Residues 109 to 131 (GPTTESVSDSSNDSTTIRPSRQT) show a composition bias toward polar residues. Over residues 132–141 (QIKEEYRDDY) the composition is skewed to basic and acidic residues. The segment covering 142-158 (VLDDELSPDEFGSDEDD) has biased composition (acidic residues). Residues 184-196 (TTRSSVSRLTPSR) are compositionally biased toward polar residues. The segment at 212–235 (YPCDKCSAKYKSLAGLSYHQSYLH) adopts a C2H2-type zinc-finger fold. PHD-type zinc fingers lie at residues 256-314 (SCDF…CKSC) and 316-361 (ICGT…CQVE).

The protein belongs to the requiem/DPF family.

It is found in the nucleus. Its subcellular location is the cytoplasm. Its function is as follows. Probable transcription factor, involved in meiosis and stress protection. This Caenorhabditis elegans protein is Zinc finger protein dpff-1.